A 236-amino-acid chain; its full sequence is Probable transcriptional regulatory protein UUR10_0292 (236 aa).

It belongs to the TACO1 family.

It is found in the cytoplasm. The chain is Probable transcriptional regulatory protein UUR10_0292 from Ureaplasma urealyticum serovar 10 (strain ATCC 33699 / Western).